The following is a 541-amino-acid chain: uncharacterized protein (541 aa).

5 consecutive transmembrane segments (helical) span residues 4 to 23, 30 to 47, 57 to 79, 91 to 113, and 156 to 178; these read FVANPLLALFVIMAVGLAIG, FSLGVAAVLFAGVGFAAV, VYILGLSIFVYSIGLESGHAFFA, LAITALALITGISIALFSLIHLN, and LVAYSLAYPIGVLGVIAAIGLCA. 2 RCK C-terminal domains span residues 187–271 and 273–354; these read QEAH…VLGD and LPGD…LFGD. Transmembrane regions (helical) follow at residues 362-384, 389-411, 424-446, 456-478, and 516-538; these read FNLFPLVAGLALGLLVGMIEVPL, ALSLGSAGGPLVVALVLGAVGRS, LALRQLGITLFLAAIGTTAGASF, LTIIAVGAIITLTLAIFVLVVGY, and LGYTSVYPLAMIAKIIAAQVVLF.

It belongs to the AAE transporter (TC 2.A.81) family.

Its subcellular location is the cell membrane. This is an uncharacterized protein from Corynebacterium diphtheriae (strain ATCC 700971 / NCTC 13129 / Biotype gravis).